Reading from the N-terminus, the 740-residue chain is Leucine-rich repeat neuronal protein 4 (740 aa).

A signal peptide spans 1 to 18; sequence MRQTLPLLLLTVLRPSWA. Residues 19-679 lie on the Extracellular side of the membrane; sequence DPPQEKVPLF…PCAAFTTKPS (661 aa). Asparagine 42 carries N-linked (GlcNAc...) asparagine glycosylation. LRR repeat units lie at residues 51–74, 75–97, 98–123, 125–144, 145–168, 174–197, 203–226, 228–251, 253–276, and 277–300; these read LPAA…GCLP, RTLR…ELGH, LEQL…GPAG, HTLD…TGPA, LSSL…AFAC, LLNL…AFAG, LVTL…WIRD, PKLT…IFKM, PNLQ…IFQD, and TPHL…TLDS. Asparagine 176 is a glycosylation site (N-linked (GlcNAc...) asparagine). N-linked (GlcNAc...) asparagine glycosylation is found at asparagine 289, asparagine 379, and asparagine 442. Positions 389–517 are disordered; it reads VAPSAAPATR…QAPNPSLSEG (129 aa). 2 stretches are compositionally biased toward polar residues: residues 430–454 and 490–514; these read APST…STTR and WDRS…NPSL. Residues 579 to 679 enclose the Fibronectin type-III domain; that stretch reads IPDPPRLQGV…PCAAFTTKPS (101 aa). N-linked (GlcNAc...) asparagine glycosylation occurs at asparagine 622. A helical membrane pass occupies residues 680–700; it reads FALLLSGLCAASGLLLASTVV. The Cytoplasmic portion of the chain corresponds to 701–740; that stretch reads LSACLCRRGQTLGLQRCDTHLVAYKNPAFDDYPLGLQTVS.

It localises to the membrane. Its function is as follows. May play an important role in hippocampus-dependent long-lasting memory. This chain is Leucine-rich repeat neuronal protein 4 (LRRN4), found in Homo sapiens (Human).